A 591-amino-acid chain; its full sequence is Metalloendopeptidase OPG085 (591 aa).

His-41 contributes to the Zn(2+) binding site. The active site involves Glu-44. His-45 and Glu-112 together coordinate Zn(2+).

Belongs to the peptidase M44 family. Zn(2+) is required as a cofactor. Undergoes proteolytic processing during the course of infection. May be cleaved into 46 kDa and 22 kDa products (Potential).

The protein resides in the virion. Its function is as follows. Probably involved in maturation of some viral proteins by processing them preferentially at Ala-Gly-|-Ser/Thr/Lys motifs. Does not seem to be responsible for the cleavage of major core proteins. The polypeptide is Metalloendopeptidase OPG085 (OPG085) (Variola virus (isolate Human/India/Ind3/1967) (VARV)).